A 728-amino-acid chain; its full sequence is Beta-galactosidase 12 (728 aa).

A signal peptide spans 1–27 (MGLNFREKAWILLGILCCSSLICSVKA). Glu185 serves as the catalytic Proton donor. Glu254 acts as the Nucleophile in catalysis. Asn255, Asn380, and Asn450 each carry an N-linked (GlcNAc...) asparagine glycan.

It belongs to the glycosyl hydrolase 35 family. Ubiquitous, with higher expression levels in roots and siliques.

It is found in the secreted. The protein localises to the extracellular space. Its subcellular location is the apoplast. The enzyme catalyses Hydrolysis of terminal non-reducing beta-D-galactose residues in beta-D-galactosides.. The sequence is that of Beta-galactosidase 12 (BGAL12) from Arabidopsis thaliana (Mouse-ear cress).